A 291-amino-acid chain; its full sequence is Fructose-1,6-bisphosphatase class 1 1 (291 aa).

Mg(2+)-binding residues include glutamate 78, aspartate 95, leucine 97, and aspartate 98. Substrate-binding positions include 98 to 101 (DGSS), tyrosine 203, and lysine 233. Position 239 (glutamate 239) interacts with Mg(2+).

It belongs to the FBPase class 1 family. In terms of assembly, homotetramer. Mg(2+) is required as a cofactor.

The protein localises to the cytoplasm. It carries out the reaction beta-D-fructose 1,6-bisphosphate + H2O = beta-D-fructose 6-phosphate + phosphate. The protein operates within carbohydrate biosynthesis; gluconeogenesis. This chain is Fructose-1,6-bisphosphatase class 1 1, found in Haloarcula marismortui (strain ATCC 43049 / DSM 3752 / JCM 8966 / VKM B-1809) (Halobacterium marismortui).